The primary structure comprises 407 residues: Carbamoyl phosphate synthase small chain (407 aa).

The tract at residues 1–205 (MTETTPKTAP…LQDGYGEQDA (205 aa)) is CPSase. Ser-60, Gly-257, and Gly-259 together coordinate L-glutamine. The Glutamine amidotransferase type-1 domain occupies 209–397 (HVVALDFGVK…INLIRERKGQ (189 aa)). The active-site Nucleophile is the Cys-286. Positions 287, 290, 328, 330, and 331 each coordinate L-glutamine. Active-site residues include His-370 and Glu-372.

Belongs to the CarA family. In terms of assembly, composed of two chains; the small (or glutamine) chain promotes the hydrolysis of glutamine to ammonia, which is used by the large (or ammonia) chain to synthesize carbamoyl phosphate. Tetramer of heterodimers (alpha,beta)4.

It carries out the reaction hydrogencarbonate + L-glutamine + 2 ATP + H2O = carbamoyl phosphate + L-glutamate + 2 ADP + phosphate + 2 H(+). The enzyme catalyses L-glutamine + H2O = L-glutamate + NH4(+). Its pathway is amino-acid biosynthesis; L-arginine biosynthesis; carbamoyl phosphate from bicarbonate: step 1/1. The protein operates within pyrimidine metabolism; UMP biosynthesis via de novo pathway; (S)-dihydroorotate from bicarbonate: step 1/3. Small subunit of the glutamine-dependent carbamoyl phosphate synthetase (CPSase). CPSase catalyzes the formation of carbamoyl phosphate from the ammonia moiety of glutamine, carbonate, and phosphate donated by ATP, constituting the first step of 2 biosynthetic pathways, one leading to arginine and/or urea and the other to pyrimidine nucleotides. The small subunit (glutamine amidotransferase) binds and cleaves glutamine to supply the large subunit with the substrate ammonia. This Brucella suis (strain ATCC 23445 / NCTC 10510) protein is Carbamoyl phosphate synthase small chain.